The following is a 179-amino-acid chain: Nucleoside-triphosphatase THEP1 (179 aa).

Residues 7–14 and 94–101 each bind ATP; these read GRPGVGKT and LIIVDEIG.

The protein belongs to the THEP1 NTPase family.

It carries out the reaction a ribonucleoside 5'-triphosphate + H2O = a ribonucleoside 5'-diphosphate + phosphate + H(+). Has nucleotide phosphatase activity towards ATP, GTP, CTP, TTP and UTP. May hydrolyze nucleoside diphosphates with lower efficiency. This Thermotoga petrophila (strain ATCC BAA-488 / DSM 13995 / JCM 10881 / RKU-1) protein is Nucleoside-triphosphatase THEP1.